A 353-amino-acid chain; its full sequence is MESMPVAPSTDPRVARLIDANLDRAREGLRVIEDWCRFGLDRQDLVVPLKDWRQQLGQLHHDRYRQARSTATDSAAGLGHPAQDTRTDSVAIVKANASRVQEALRVIEEFARNGDAVLARTAAAVRYALYDHEVRILEACGHSRRKQQLEDARLCLITDPGADDGCERLVQRVEAALQSGVSLVQYRRKHGSDGLRLQEAQQLAQLCHEHNALFIVNDRIDLALLVNADGVHLGQEDLPYREARRLLGSAKLIGRSTHKLAQLHEAQEQGADYVGVGPVFATATKADRHPAGLSWVKEACEAARIPWFAIGGITATTLPRVREAGAQRVAVVSAIMASEDPASASRQLLDLLT.

A unknown region spans residues 1–128 (MESMPVAPST…ARTAAAVRYA (128 aa)). The tract at residues 129–353 (LYDHEVRILE…ASRQLLDLLT (225 aa)) is thiamine-phosphate synthase. Residues 185 to 189 (QYRRK) and asparagine 217 each bind 4-amino-2-methyl-5-(diphosphooxymethyl)pyrimidine. Aspartate 218 and aspartate 237 together coordinate Mg(2+). Serine 256 lines the 4-amino-2-methyl-5-(diphosphooxymethyl)pyrimidine pocket. 282–284 (TAT) contacts 2-[(2R,5Z)-2-carboxy-4-methylthiazol-5(2H)-ylidene]ethyl phosphate. Position 285 (lysine 285) interacts with 4-amino-2-methyl-5-(diphosphooxymethyl)pyrimidine. 2-[(2R,5Z)-2-carboxy-4-methylthiazol-5(2H)-ylidene]ethyl phosphate is bound by residues glycine 312 and 332-333 (VS).

The protein belongs to the thiamine-phosphate synthase family. Mg(2+) serves as cofactor.

The catalysed reaction is 2-[(2R,5Z)-2-carboxy-4-methylthiazol-5(2H)-ylidene]ethyl phosphate + 4-amino-2-methyl-5-(diphosphooxymethyl)pyrimidine + 2 H(+) = thiamine phosphate + CO2 + diphosphate. It catalyses the reaction 2-(2-carboxy-4-methylthiazol-5-yl)ethyl phosphate + 4-amino-2-methyl-5-(diphosphooxymethyl)pyrimidine + 2 H(+) = thiamine phosphate + CO2 + diphosphate. It carries out the reaction 4-methyl-5-(2-phosphooxyethyl)-thiazole + 4-amino-2-methyl-5-(diphosphooxymethyl)pyrimidine + H(+) = thiamine phosphate + diphosphate. The protein operates within cofactor biosynthesis; thiamine diphosphate biosynthesis; thiamine phosphate from 4-amino-2-methyl-5-diphosphomethylpyrimidine and 4-methyl-5-(2-phosphoethyl)-thiazole: step 1/1. Its function is as follows. Condenses 4-methyl-5-(beta-hydroxyethyl)thiazole monophosphate (THZ-P) and 2-methyl-4-amino-5-hydroxymethyl pyrimidine pyrophosphate (HMP-PP) to form thiamine monophosphate (TMP). The protein is Thiamine-phosphate synthase of Synechococcus sp. (strain WH7803).